Here is a 699-residue protein sequence, read N- to C-terminus: Elongation factor G (699 aa).

A tr-type G domain is found at 8–283 (EHIRNIGICA…AIVDFLPSPI (276 aa)). Residues 17–24 (AHIDAGKT), 81–85 (DTPGH), and 135–138 (NKMD) contribute to the GTP site.

Belongs to the TRAFAC class translation factor GTPase superfamily. Classic translation factor GTPase family. EF-G/EF-2 subfamily.

It is found in the cytoplasm. In terms of biological role, catalyzes the GTP-dependent ribosomal translocation step during translation elongation. During this step, the ribosome changes from the pre-translocational (PRE) to the post-translocational (POST) state as the newly formed A-site-bound peptidyl-tRNA and P-site-bound deacylated tRNA move to the P and E sites, respectively. Catalyzes the coordinated movement of the two tRNA molecules, the mRNA and conformational changes in the ribosome. This chain is Elongation factor G, found in Rickettsia typhi (strain ATCC VR-144 / Wilmington).